A 485-amino-acid polypeptide reads, in one-letter code: Bcl-2-like protein 13 (485 aa).

The short motif at 14–30 (ETKYVVLSYLGLLSQEK) is the BH4 element. Residue serine 38 is modified to Phosphoserine. Positions 100 to 116 (MEDCLAHLGEKVSQELK) match the BH3 motif. A BH1 motif is present at residues 147 to 157 (ASGWNKILVPL). A BH2 motif is present at residues 193–206 (YIIQQGGWGTVFSL). Residues 218-248 (AEDSNDIYILPSDNSGQVSPPESPTVTTSWQ) form a disordered region. Polar residues predominate over residues 229-248 (SDNSGQVSPPESPTVTTSWQ). Residues 246-256 (SWQSESLPVSL) form an A repeat. Serine 259, serine 261, serine 303, serine 326, serine 371, serine 375, serine 410, serine 420, serine 426, serine 429, and serine 444 each carry phosphoserine. One copy of the A; approximate repeat lies at 261-271 (SWHTESLPVSL). The disordered stretch occupies residues 418-451 (EESLVEELSPASEKKPVPPSEGKSRLSPAGEMKP). The stretch at 425-441 (LSPASEKKPVPPSEGKS) is one B repeat. A B; approximate repeat occupies 443 to 459 (LSPAGEMKPMPLSEGKS). Residues 460 to 480 (ILLFGGAAAVAILAVAIGVAL) traverse the membrane as a helical segment.

Belongs to the Bcl-2 family. In terms of assembly, monomer. As to expression, ubiquitous, with the highest levels of expression in heart, placenta and pancreas.

Its subcellular location is the mitochondrion membrane. It is found in the nucleus. Its function is as follows. May promote the activation of caspase-3 and apoptosis. In Homo sapiens (Human), this protein is Bcl-2-like protein 13 (BCL2L13).